The chain runs to 276 residues: Shikimate dehydrogenase (NADP(+)) (276 aa).

Shikimate contacts are provided by residues Ser15 to Ser17 and Thr62. Catalysis depends on Lys66, which acts as the Proton acceptor. Position 78 (Glu78) interacts with NADP(+). Residues Asn87 and Asp103 each coordinate shikimate. Residues Gly128–Ala132 and Ile217 each bind NADP(+). Tyr219 is a binding site for shikimate. NADP(+) is bound at residue Gly240.

This sequence belongs to the shikimate dehydrogenase family. Homodimer.

It catalyses the reaction shikimate + NADP(+) = 3-dehydroshikimate + NADPH + H(+). It functions in the pathway metabolic intermediate biosynthesis; chorismate biosynthesis; chorismate from D-erythrose 4-phosphate and phosphoenolpyruvate: step 4/7. Its function is as follows. Involved in the biosynthesis of the chorismate, which leads to the biosynthesis of aromatic amino acids. Catalyzes the reversible NADPH linked reduction of 3-dehydroshikimate (DHSA) to yield shikimate (SA). This is Shikimate dehydrogenase (NADP(+)) from Lysinibacillus sphaericus (strain C3-41).